The chain runs to 78 residues: Protein SlyX homolog (78 aa).

Belongs to the SlyX family.

The chain is Protein SlyX homolog from Xanthomonas euvesicatoria pv. vesicatoria (strain 85-10) (Xanthomonas campestris pv. vesicatoria).